The primary structure comprises 237 residues: MTRRYWNIDLEEMIGAGVSFGHGTRKWNPKMAPYISVKHKGIHFTNLTKTARFLSEACDLVFYAASRGKQFLIVDTKNKAADSAAWAAIKARCHCVNKKWPGGMLTNWSTTETRLHKLRDLIMEQKAGRLNRLKKKDEAAVKRQLARLQTYLGGIKYMTRLPDIVIIVDQHEEYKALHECITIGIPTIGLIDTNCDPDLADISIPANDDAISSIRLILNKLVFAICEGRSGYIIKNI.

It belongs to the universal ribosomal protein uS2 family.

It localises to the plastid. The polypeptide is Small ribosomal subunit protein uS2c (rps2) (Epifagus virginiana (Beechdrops)).